The following is a 218-amino-acid chain: Dehydration-responsive element-binding protein 1B (218 aa).

The segment at 1–26 (MEVEEAAYRTVWSEPPKRPAGRTKFR) is disordered. The AP2/ERF DNA-binding region spans 32–95 (VYRGVRRRGG…RGRAACLNFA (64 aa)). The segment at 131-151 (SAAPSSPAETFADDGDEEEDN) is disordered. The segment covering 141–151 (FADDGDEEEDN) has biased composition (acidic residues).

Belongs to the AP2/ERF transcription factor family. ERF subfamily.

Its subcellular location is the nucleus. In terms of biological role, transcriptional activator that binds specifically to the DNA sequence 5'-[AG]CCGAC-3'. Binding to the C-repeat/DRE element mediates high salinity- and dehydration-inducible transcription. Confers resistance to high salt, cold and drought stress. The sequence is that of Dehydration-responsive element-binding protein 1B (DREB1B) from Oryza sativa subsp. indica (Rice).